Consider the following 105-residue polypeptide: Large ribosomal subunit protein uL24 (105 aa).

The protein belongs to the universal ribosomal protein uL24 family. Part of the 50S ribosomal subunit.

Its function is as follows. One of two assembly initiator proteins, it binds directly to the 5'-end of the 23S rRNA, where it nucleates assembly of the 50S subunit. In terms of biological role, one of the proteins that surrounds the polypeptide exit tunnel on the outside of the subunit. This chain is Large ribosomal subunit protein uL24, found in Nitrosococcus oceani (strain ATCC 19707 / BCRC 17464 / JCM 30415 / NCIMB 11848 / C-107).